A 348-amino-acid polypeptide reads, in one-letter code: Rhodopsin (348 aa).

Met-1 carries the N-acetylmethionine modification. Topologically, residues 1 to 36 are extracellular; the sequence is MNGTEGLNFYVPFSNKTGVVRSPFEYPQYYLAEPWQ. Residues Asn-2 and Asn-15 are each glycosylated (N-linked (GlcNAc...) asparagine). A helical membrane pass occupies residues 37–61; the sequence is FSVLAAYMFLLIVLGFPINFLTLYV. Topologically, residues 62-73 are cytoplasmic; the sequence is TVQHKKLRTPLN. The chain crosses the membrane as a helical span at residues 74 to 96; that stretch reads YIPLNLAVANLFMVFGGFTTTLY. Topologically, residues 97–110 are extracellular; sequence TSLHAYFVFGPTGC. Residues Cys-110 and Cys-187 are joined by a disulfide bond. Residues 111–133 traverse the membrane as a helical segment; sequence NLEGFFATLGGEIALWSLVVLAI. Positions 134-136 match the 'Ionic lock' involved in activated form stabilization motif; that stretch reads ERY. Topologically, residues 134-152 are cytoplasmic; sequence ERYVVVCKPMSNFRFGENH. Residues 153–173 traverse the membrane as a helical segment; it reads AIMGLALTWVMAMACAAPPLV. The Extracellular segment spans residues 174–202; sequence GWSRYIPEGMQCSCGIDYYTSRQEVNNES. Glu-201 provides a ligand contact to Zn(2+). Residues 203 to 224 form a helical membrane-spanning segment; it reads FVIYMFVVHFTIPLVIIFFCYG. At 225-252 the chain is on the cytoplasmic side; sequence QLVFTVKEAAAQQQESATTQKAEKEVTR. The chain crosses the membrane as a helical span at residues 253 to 274; the sequence is MVIIMVVAFLICWVPYASVAFY. The Extracellular portion of the chain corresponds to 275 to 286; it reads IFTHQGSDFGPI. Gln-279 provides a ligand contact to Zn(2+). The helical transmembrane segment at 287–308 threads the bilayer; it reads FMTIPSFFAKSSSIYNPVIYIM. Lys-296 carries the N6-(retinylidene)lysine modification. Residues 309 to 348 lie on the Cytoplasmic side of the membrane; the sequence is MNKQLRNCMLTTLCCGRNPLGDDEASTTASKTETSQVAPA. 2 S-palmitoyl cysteine lipidation sites follow: Cys-322 and Cys-323. Residues 330-348 form an interaction with SAG region; that stretch reads DDEASTTASKTETSQVAPA. Ser-334 carries the post-translational modification Phosphoserine. Residues Thr-335 and Thr-336 each carry the phosphothreonine modification. A Phosphoserine modification is found at Ser-338. A phosphothreonine mark is found at Thr-340 and Thr-342. Residue Ser-343 is modified to Phosphoserine.

Belongs to the G-protein coupled receptor 1 family. Opsin subfamily. As to quaternary structure, homodimer. May form a complex composed of RHO, GRK1 and RCVRN in a Ca(2+)-dependent manner; RCVRN prevents the interaction between GRK1 and RHO. Interacts with GRK1. Interacts (phosphorylated form) with SAG. Interacts with GNAT1. Interacts with GNAT3. SAG and G-proteins compete for a common binding site. Interacts with PRCD; the interaction promotes PRCD stability. Forms a complex with ASAP1 and ARF4. Forms a complex with ASAP1, RAB11A, Rabin8/RAB3IP, ARF4 and RAB11FIP3; the complex regulates Golgi-to-cilia rhodopsin/RHO transport in photoreceptors. In terms of processing, phosphorylated on some or all of the serine and threonine residues present in the C-terminal region. Contains one covalently linked retinal chromophore. Upon light absorption, the covalently bound 11-cis-retinal is converted to all-trans-retinal. After hydrolysis of the Schiff base and release of the covalently bound all-trans-retinal, active rhodopsin is regenerated by binding of a fresh molecule of 11-cis-retinal.

Its subcellular location is the membrane. It localises to the cell projection. The protein localises to the cilium. It is found in the photoreceptor outer segment. In terms of biological role, photoreceptor required for image-forming vision at low light intensity. Required for photoreceptor cell viability after birth. Light-induced isomerization of 11-cis to all-trans retinal triggers a conformational change that activates signaling via G-proteins. Subsequent receptor phosphorylation mediates displacement of the bound G-protein alpha subunit by the arrestin SAG and terminates signaling. The sequence is that of Rhodopsin (RHO) from Globicephala melas (Long-finned pilot whale).